The primary structure comprises 98 residues: uncharacterized protein (98 aa).

This is an uncharacterized protein from Schizosaccharomyces pombe (strain 972 / ATCC 24843) (Fission yeast).